A 193-amino-acid chain; its full sequence is Tellurium resistance protein TerZ (193 aa).

This sequence belongs to the CAPAB/TerDEXZ family.

Its function is as follows. Not known; seems to contribute to the tellurium resistance (Ter) mechanism. Also involved in phage inhibition (Phi) and colicin resistance (PacB). The sequence is that of Tellurium resistance protein TerZ (terZ) from Serratia marcescens.